A 373-amino-acid polypeptide reads, in one-letter code: Probable G-protein coupled receptor 173 (373 aa).

The Extracellular segment spans residues 1–26 (MANTTGEPEEVSGALSPPSAVAYVKL). An N-linked (GlcNAc...) asparagine glycan is attached at Asn3. The chain crosses the membrane as a helical span at residues 27-47 (VLLGLIMCVSLAGNAILSLLV). The Cytoplasmic segment spans residues 48-59 (LKDRALHKAPYY). Residues 60–80 (FLLDLCLADGIRSAVCFPFVL) traverse the membrane as a helical segment. Topologically, residues 81–97 (ASVRHGSSWTFSALSCK) are extracellular. A disulfide bridge connects residues Cys96 and Cys174. The chain crosses the membrane as a helical span at residues 98–118 (IVAFMAVLFCFHAAFMLFCIS). Residues 119–139 (VTRYMAIAHHRFYAKRMTLWT) are Cytoplasmic-facing. Residues 140 to 160 (CAAVICMAWTLSVAMAFPPVF) form a helical membrane-spanning segment. Topologically, residues 161–188 (DVGTYKFIREEDQCIFEHRYFKANDTLG) are extracellular. The N-linked (GlcNAc...) asparagine glycan is linked to Asn184. A helical transmembrane segment spans residues 189 to 209 (FMLMLAVLMAATHAVYGKLLL). Over 210–287 (FEYRHRKMKP…VKGEKQLGRM (78 aa)) the chain is Cytoplasmic. Residues 288 to 308 (FYAITLLFLLLWSPYIVACYW) form a helical membrane-spanning segment. The Extracellular portion of the chain corresponds to 309–322 (RVFVKACAVPHRYL). A helical membrane pass occupies residues 323-343 (ATAVWMSFAQAAVNPIVCFLL). Residues 344-373 (NKDLKKCLRTHAPCWGTGGAPAPREPYCVM) lie on the Cytoplasmic side of the membrane.

The protein belongs to the G-protein coupled receptor 1 family.

It localises to the cell membrane. Is a receptor for the SMIM20 derived peptides Phoenixin-14 and Phoenixin-20. It mediates the Phoenixin-14 and Phoenixin-20 augmentation of gonadotropin-releasing hormone (GNRH) signaling in the hypothalamus and pituitary gland. In the ovary, it mediates the effects of Phoenixin-14 and Phoenixin-20 induced granulosa cell proliferation during follicular growth. The polypeptide is Probable G-protein coupled receptor 173 (GPR173) (Bos taurus (Bovine)).